A 399-amino-acid chain; its full sequence is Acetate kinase (399 aa).

Residue N7 participates in Mg(2+) binding. K14 is an ATP binding site. R90 serves as a coordination point for substrate. D147 (proton donor/acceptor) is an active-site residue. ATP-binding positions include H207–G211, D282–R284, and G330–N334. E385 contributes to the Mg(2+) binding site.

This sequence belongs to the acetokinase family. As to quaternary structure, homodimer. The cofactor is Mg(2+). Mn(2+) serves as cofactor.

The protein resides in the cytoplasm. It carries out the reaction acetate + ATP = acetyl phosphate + ADP. It participates in metabolic intermediate biosynthesis; acetyl-CoA biosynthesis; acetyl-CoA from acetate: step 1/2. In terms of biological role, catalyzes the formation of acetyl phosphate from acetate and ATP. Can also catalyze the reverse reaction. The protein is Acetate kinase of Caldicellulosiruptor saccharolyticus (strain ATCC 43494 / DSM 8903 / Tp8T 6331).